The primary structure comprises 185 residues: Threonylcarbamoyl-AMP synthase (185 aa).

The 185-residue stretch at 1 to 185 (MKNFEQVLKA…AKTSQILRQG (185 aa)) folds into the YrdC-like domain. Residues 163–185 (ETSGRNKPSEIRDAKTSQILRQG) are disordered. The segment covering 164 to 177 (TSGRNKPSEIRDAK) has biased composition (basic and acidic residues).

Belongs to the SUA5 family. TsaC subfamily.

The protein localises to the cytoplasm. The catalysed reaction is L-threonine + hydrogencarbonate + ATP = L-threonylcarbamoyladenylate + diphosphate + H2O. Its function is as follows. Required for the formation of a threonylcarbamoyl group on adenosine at position 37 (t(6)A37) in tRNAs that read codons beginning with adenine. Catalyzes the conversion of L-threonine, HCO(3)(-)/CO(2) and ATP to give threonylcarbamoyl-AMP (TC-AMP) as the acyladenylate intermediate, with the release of diphosphate. This is Threonylcarbamoyl-AMP synthase from Vibrio campbellii (strain ATCC BAA-1116).